The chain runs to 580 residues: DNA ligase 1 (580 aa).

Glutamate 245 contacts ATP. Lysine 247 functions as the N6-AMP-lysine intermediate in the catalytic mechanism. Residues arginine 252, arginine 267, glutamate 297, phenylalanine 343, arginine 420, and lysine 426 each contribute to the ATP site.

This sequence belongs to the ATP-dependent DNA ligase family. Mg(2+) is required as a cofactor.

It carries out the reaction ATP + (deoxyribonucleotide)n-3'-hydroxyl + 5'-phospho-(deoxyribonucleotide)m = (deoxyribonucleotide)n+m + AMP + diphosphate.. Functionally, DNA ligase that seals nicks in double-stranded DNA during DNA replication, DNA recombination and DNA repair. This chain is DNA ligase 1, found in Methanosarcina acetivorans (strain ATCC 35395 / DSM 2834 / JCM 12185 / C2A).